Consider the following 342-residue polypeptide: MEKQILEPQLSALRLPAFNVPWPGARSPHAEVIEARMIEWADHYDLLVNDEHRSRVIRARYGWLAARCYPNAAKELLQVIADYFVWFFLADDLFVDRVETVSGDTLRNLTAMIDVLDFNSAGLEPVWGELAWLDVCRRLRSLLQAEPFERFAQGMRLWATTAGLQILNHIRPKSVGIREYQTIRRHTSGMNPCTALSDAANNGSVKPYEFYQPDVQALVRRANNIVCWANDIQSLGVEIRQPGQFRNMVVIYAEQGGSLQNSVETTAARVDAEISSFLELADAVTARANVTLRGLVDGLKYWIRGYLDWVEHDTLRYVDKFAAVDADDRFLSTPQVASRHSV.

Mg(2+) is bound by residues aspartate 91 and aspartate 96. Residues 91-96 (DDLFVD) carry the DDXXXD motif motif. Substrate is bound at residue arginine 184. Residues asparagine 230, serine 234, and glutamate 238 each coordinate Mg(2+).

This sequence belongs to the terpene synthase family. Mg(2+) is required as a cofactor.

The enzyme catalyses (2E,6E)-farnesyl diphosphate + H2O = (+)-corvol ether B + diphosphate. It carries out the reaction (2E,6E)-farnesyl diphosphate + H2O = (+)-corvol ether A + diphosphate. In terms of biological role, terpene synthase that catalyzes the conversion of (2E,6E)-farnesyl diphosphate (FPP) into sesquiterpenes which are important for fungi-environment interactions. Produces a mixture consisting of 8 sesquiterpenes including corvol ethers A and B, as well as traces of epizonarene, gamma-cadinene, delta-cadinene, alpha-cadinene, alpha-cadinol, and an unidentified sesquiterpene. The major product is corvol ether A. This Metarhizium brunneum (strain ARSEF 3297) protein is Sesquiterpene synthase MBR_09977.